The chain runs to 229 residues: Potassium/proton antiporter CemA (229 aa).

Transmembrane regions (helical) follow at residues 114–134 and 189–209; these read IIYF…LIIL and IISG…KYWI.

The protein belongs to the CemA family.

Its subcellular location is the plastid. The protein localises to the chloroplast inner membrane. The enzyme catalyses K(+)(in) + H(+)(out) = K(+)(out) + H(+)(in). Functionally, contributes to K(+)/H(+) antiport activity by supporting proton efflux to control proton extrusion and homeostasis in chloroplasts in a light-dependent manner to modulate photosynthesis. Prevents excessive induction of non-photochemical quenching (NPQ) under continuous-light conditions. Indirectly promotes efficient inorganic carbon uptake into chloroplasts. The chain is Potassium/proton antiporter CemA from Lotus japonicus (Lotus corniculatus var. japonicus).